We begin with the raw amino-acid sequence, 238 residues long: CD63 antigen (238 aa).

Residues 2–11 (AVEGGMKCVK) lie on the Cytoplasmic side of the membrane. A helical transmembrane segment spans residues 12-32 (FLLYVLLLAFCACAVGLIAIG). The Extracellular portion of the chain corresponds to 33 to 51 (VAVQVVLKQAITHETTAGS). Residues 52-72 (LLPVVIIAVGAFLFLVAFVGC) traverse the membrane as a helical segment. The Cytoplasmic segment spans residues 73 to 81 (CGACKENYC). The chain crosses the membrane as a helical span at residues 82–102 (LMITFAIFLSLIMLVEVAVAI). The Extracellular segment spans residues 103-203 (AGYVFRDQVK…TIAAWLRKNV (101 aa)). N-linked (GlcNAc...) asparagine glycans are attached at residues Asn-130, Asn-150, and Asn-172. The chain crosses the membrane as a helical span at residues 204 to 224 (LLVAGAALGIAFVEVLGIIFS). Over 225–238 (CCLVKSIRSGYEVM) the chain is Cytoplasmic. Positions 234–238 (GYEVM) match the Lysosomal targeting motif motif.

The protein belongs to the tetraspanin (TM4SF) family. In terms of assembly, interacts with TIMP1 and ITGB1 and recruits TIMP1 to ITGB1. Interacts with CD9. Identified in a complex with CD9 and ITGB3. Interacts with PMEL. Interacts with KDR/VEGFR2; identified in a complex with ITGB1 and KDR/VEGFR2 and is required to recruit KDR to ITGB1 complexes. Interacts with SYT7. In terms of processing, palmitoylated at a low, basal level in unstimulated platelets. The level of palmitoylation increases when platelets are activated by thrombin (in vitro). In terms of tissue distribution, detected in mast cells and platelets (at protein level).

It localises to the cell membrane. Its subcellular location is the lysosome membrane. The protein resides in the late endosome membrane. The protein localises to the endosome. It is found in the multivesicular body. It localises to the melanosome. Its subcellular location is the secreted. The protein resides in the extracellular exosome. The protein localises to the cell surface. In terms of biological role, functions as a cell surface receptor for TIMP1 and plays a role in the activation of cellular signaling cascades. Plays a role in the activation of ITGB1 and integrin signaling, leading to the activation of AKT, FAK/PTK2 and MAP kinases. Promotes cell survival, reorganization of the actin cytoskeleton, cell adhesion, spreading and migration, via its role in the activation of AKT and FAK/PTK2. Plays a role in VEGFA signaling via its role in regulating the internalization of KDR/VEGFR2. Plays a role in intracellular vesicular transport processes, and is required for normal trafficking of the PMEL luminal domain that is essential for the development and maturation of melanocytes. Plays a role in the adhesion of leukocytes onto endothelial cells via its role in the regulation of SELP trafficking. May play a role in mast cell degranulation in response to Ms4a2/FceRI stimulation, but not in mast cell degranulation in response to other stimuli. The protein is CD63 antigen (Cd63) of Rattus norvegicus (Rat).